The chain runs to 148 residues: UPF0179 protein Mboo_1959 (148 aa).

It belongs to the UPF0179 family.

The chain is UPF0179 protein Mboo_1959 from Methanoregula boonei (strain DSM 21154 / JCM 14090 / 6A8).